Consider the following 194-residue polypeptide: Leucyl/phenylalanyl-tRNA--protein transferase (194 aa).

This sequence belongs to the L/F-transferase family.

It localises to the cytoplasm. The catalysed reaction is N-terminal L-lysyl-[protein] + L-leucyl-tRNA(Leu) = N-terminal L-leucyl-L-lysyl-[protein] + tRNA(Leu) + H(+). The enzyme catalyses N-terminal L-arginyl-[protein] + L-leucyl-tRNA(Leu) = N-terminal L-leucyl-L-arginyl-[protein] + tRNA(Leu) + H(+). It catalyses the reaction L-phenylalanyl-tRNA(Phe) + an N-terminal L-alpha-aminoacyl-[protein] = an N-terminal L-phenylalanyl-L-alpha-aminoacyl-[protein] + tRNA(Phe). Its function is as follows. Functions in the N-end rule pathway of protein degradation where it conjugates Leu, Phe and, less efficiently, Met from aminoacyl-tRNAs to the N-termini of proteins containing an N-terminal arginine or lysine. This Chlorobium phaeobacteroides (strain DSM 266 / SMG 266 / 2430) protein is Leucyl/phenylalanyl-tRNA--protein transferase.